The chain runs to 397 residues: Phosphoglycerate kinase (397 aa).

Residues 22–24 (DLN), Arg37, 60–63 (HFGR), Arg119, and Arg152 each bind substrate. ATP-binding positions include Lys202, Glu324, and 354 to 357 (GGDT).

This sequence belongs to the phosphoglycerate kinase family. Monomer.

It is found in the cytoplasm. The enzyme catalyses (2R)-3-phosphoglycerate + ATP = (2R)-3-phospho-glyceroyl phosphate + ADP. It functions in the pathway carbohydrate degradation; glycolysis; pyruvate from D-glyceraldehyde 3-phosphate: step 2/5. This is Phosphoglycerate kinase from Rhizorhabdus wittichii (strain DSM 6014 / CCUG 31198 / JCM 15750 / NBRC 105917 / EY 4224 / RW1) (Sphingomonas wittichii).